We begin with the raw amino-acid sequence, 98 residues long: NADH-ubiquinone oxidoreductase chain 4L (98 aa).

3 consecutive transmembrane segments (helical) span residues 1 to 21 (MSLVYMNIMTAFMVSLAGLLM), 29 to 49 (SLLCLEGMMLSLFVLATLTIL), and 61 to 81 (IILLVFGACEAALGLSLLVMV).

It belongs to the complex I subunit 4L family. As to quaternary structure, core subunit of respiratory chain NADH dehydrogenase (Complex I) which is composed of 45 different subunits.

It is found in the mitochondrion inner membrane. The enzyme catalyses a ubiquinone + NADH + 5 H(+)(in) = a ubiquinol + NAD(+) + 4 H(+)(out). In terms of biological role, core subunit of the mitochondrial membrane respiratory chain NADH dehydrogenase (Complex I) which catalyzes electron transfer from NADH through the respiratory chain, using ubiquinone as an electron acceptor. Part of the enzyme membrane arm which is embedded in the lipid bilayer and involved in proton translocation. This Muntiacus vuquangensis (Giant muntjac) protein is NADH-ubiquinone oxidoreductase chain 4L (MT-ND4L).